The chain runs to 589 residues: DNA ligase (589 aa).

Residue E250 participates in ATP binding. The N6-AMP-lysine intermediate role is filled by K252. Positions 257, 272, 302, 342, 417, and 423 each coordinate ATP.

The protein belongs to the ATP-dependent DNA ligase family. The cofactor is Mg(2+).

The enzyme catalyses ATP + (deoxyribonucleotide)n-3'-hydroxyl + 5'-phospho-(deoxyribonucleotide)m = (deoxyribonucleotide)n+m + AMP + diphosphate.. Its function is as follows. DNA ligase that seals nicks in double-stranded DNA during DNA replication, DNA recombination and DNA repair. This chain is DNA ligase, found in Cenarchaeum symbiosum (strain A).